The chain runs to 453 residues: Bifunctional protein GlmU (453 aa).

Residues 1–226 (MLDILILAAG…IQEVEGINNR (226 aa)) are pyrophosphorylase. UDP-N-acetyl-alpha-D-glucosamine contacts are provided by residues 7–10 (LAAG), K21, Q72, 77–78 (GT), 99–101 (YGD), G136, E151, N166, and N224. D101 provides a ligand contact to Mg(2+). A Mg(2+)-binding site is contributed by N224. The segment at 227 to 247 (QQQATLERYYQQQQARALMDA) is linker. Residues 248–453 (GVTLLDPARF…QGWERPTRKS (206 aa)) form an N-acetyltransferase region. The UDP-N-acetyl-alpha-D-glucosamine site is built by R330 and K348. Catalysis depends on H360, which acts as the Proton acceptor. UDP-N-acetyl-alpha-D-glucosamine is bound by residues Y363 and N374. Residues A377, 383 to 384 (NY), S402, A420, and R437 each bind acetyl-CoA.

The protein in the N-terminal section; belongs to the N-acetylglucosamine-1-phosphate uridyltransferase family. In the C-terminal section; belongs to the transferase hexapeptide repeat family. In terms of assembly, homotrimer. Mg(2+) is required as a cofactor.

It localises to the cytoplasm. The enzyme catalyses alpha-D-glucosamine 1-phosphate + acetyl-CoA = N-acetyl-alpha-D-glucosamine 1-phosphate + CoA + H(+). It catalyses the reaction N-acetyl-alpha-D-glucosamine 1-phosphate + UTP + H(+) = UDP-N-acetyl-alpha-D-glucosamine + diphosphate. The protein operates within nucleotide-sugar biosynthesis; UDP-N-acetyl-alpha-D-glucosamine biosynthesis; N-acetyl-alpha-D-glucosamine 1-phosphate from alpha-D-glucosamine 6-phosphate (route II): step 2/2. It functions in the pathway nucleotide-sugar biosynthesis; UDP-N-acetyl-alpha-D-glucosamine biosynthesis; UDP-N-acetyl-alpha-D-glucosamine from N-acetyl-alpha-D-glucosamine 1-phosphate: step 1/1. It participates in bacterial outer membrane biogenesis; LPS lipid A biosynthesis. Its function is as follows. Catalyzes the last two sequential reactions in the de novo biosynthetic pathway for UDP-N-acetylglucosamine (UDP-GlcNAc). The C-terminal domain catalyzes the transfer of acetyl group from acetyl coenzyme A to glucosamine-1-phosphate (GlcN-1-P) to produce N-acetylglucosamine-1-phosphate (GlcNAc-1-P), which is converted into UDP-GlcNAc by the transfer of uridine 5-monophosphate (from uridine 5-triphosphate), a reaction catalyzed by the N-terminal domain. The sequence is that of Bifunctional protein GlmU from Cellvibrio japonicus (strain Ueda107) (Pseudomonas fluorescens subsp. cellulosa).